Consider the following 99-residue polypeptide: DNA-directed RNA polymerase subunit omega (99 aa).

Belongs to the RNA polymerase subunit omega family. The RNAP catalytic core consists of 2 alpha, 1 beta, 1 beta' and 1 omega subunit. When a sigma factor is associated with the core the holoenzyme is formed, which can initiate transcription.

It carries out the reaction RNA(n) + a ribonucleoside 5'-triphosphate = RNA(n+1) + diphosphate. In terms of biological role, promotes RNA polymerase assembly. Latches the N- and C-terminal regions of the beta' subunit thereby facilitating its interaction with the beta and alpha subunits. In Deinococcus radiodurans (strain ATCC 13939 / DSM 20539 / JCM 16871 / CCUG 27074 / LMG 4051 / NBRC 15346 / NCIMB 9279 / VKM B-1422 / R1), this protein is DNA-directed RNA polymerase subunit omega (rpoZ).